Consider the following 202-residue polypeptide: ATP-dependent Clp protease proteolytic subunit (202 aa).

Residue Ser-98 is the Nucleophile of the active site. His-123 is a catalytic residue.

It belongs to the peptidase S14 family. As to quaternary structure, fourteen ClpP subunits assemble into 2 heptameric rings which stack back to back to give a disk-like structure with a central cavity, resembling the structure of eukaryotic proteasomes.

The protein resides in the cytoplasm. It carries out the reaction Hydrolysis of proteins to small peptides in the presence of ATP and magnesium. alpha-casein is the usual test substrate. In the absence of ATP, only oligopeptides shorter than five residues are hydrolyzed (such as succinyl-Leu-Tyr-|-NHMec, and Leu-Tyr-Leu-|-Tyr-Trp, in which cleavage of the -Tyr-|-Leu- and -Tyr-|-Trp bonds also occurs).. Functionally, cleaves peptides in various proteins in a process that requires ATP hydrolysis. Has a chymotrypsin-like activity. Plays a major role in the degradation of misfolded proteins. The protein is ATP-dependent Clp protease proteolytic subunit of Magnetococcus marinus (strain ATCC BAA-1437 / JCM 17883 / MC-1).